The following is a 607-amino-acid chain: Aspartate--tRNA(Asp/Asn) ligase (607 aa).

L-aspartate is bound at residue Glu168. The interval 192–195 is aspartate; sequence QLFK. Residue Arg214 participates in L-aspartate binding. ATP contacts are provided by residues 214-216 and Gln223; that span reads RDE. His449 serves as a coordination point for L-aspartate. Glu483 contacts ATP. Arg490 lines the L-aspartate pocket. ATP is bound at residue 535 to 538; the sequence is GWDR. Positions 578–607 are disordered; that stretch reads LEAGVDARPKPEARAQAGTAGPAAPVADPT. Over residues 580–590 the composition is skewed to basic and acidic residues; it reads AGVDARPKPEA. The segment covering 591–607 has biased composition (low complexity); sequence RAQAGTAGPAAPVADPT.

This sequence belongs to the class-II aminoacyl-tRNA synthetase family. Type 1 subfamily. In terms of assembly, homodimer.

It localises to the cytoplasm. The enzyme catalyses tRNA(Asx) + L-aspartate + ATP = L-aspartyl-tRNA(Asx) + AMP + diphosphate. Functionally, aspartyl-tRNA synthetase with relaxed tRNA specificity since it is able to aspartylate not only its cognate tRNA(Asp) but also tRNA(Asn). Reaction proceeds in two steps: L-aspartate is first activated by ATP to form Asp-AMP and then transferred to the acceptor end of tRNA(Asp/Asn). This chain is Aspartate--tRNA(Asp/Asn) ligase, found in Salinispora tropica (strain ATCC BAA-916 / DSM 44818 / JCM 13857 / NBRC 105044 / CNB-440).